The primary structure comprises 157 residues: MSSAICPCGSGDLLLACCGRYHAGQPAPCAEKLMRSRYSAYVLGLTDYLVQTTLPVQQSGLNREAIAQWSAQSTWLGLEVESSEVFGGKPEHAFVTFTARWHDGNGEHSHKERSSFVQNQGRWYFIDSTVPLKAGRNDACPCGSEQKFKKCCSPYVV.

It belongs to the UPF0225 family.

In Pseudomonas savastanoi pv. phaseolicola (strain 1448A / Race 6) (Pseudomonas syringae pv. phaseolicola (strain 1448A / Race 6)), this protein is UPF0225 protein PSPPH_1399.